A 283-amino-acid chain; its full sequence is Nucleotide-binding protein Sama_3091 (283 aa).

8-15 (GRSGSGKS) contributes to the ATP binding site. 56 to 59 (DIRN) is a binding site for GTP.

The protein belongs to the RapZ-like family.

Displays ATPase and GTPase activities. In Shewanella amazonensis (strain ATCC BAA-1098 / SB2B), this protein is Nucleotide-binding protein Sama_3091.